We begin with the raw amino-acid sequence, 704 residues long: Nucleolar and coiled-body phosphoprotein 1 (704 aa).

Positions 10–42 (VPSDLYPLVLGFLRDNQLSEVASKFAKATGATQ) constitute a LisH domain. Residue K33 is modified to N6-acetyllysine. Positions 65–638 (KVKLQSNGPV…PFRRVREEEI (574 aa)) are disordered. Glycyl lysine isopeptide (Lys-Gly) (interchain with G-Cter in SUMO2) cross-links involve residues K67 and K76. 2 Acidic serine cluster repeats span residues 84–95 (SSDSSEDSSEEE) and 127–138 (ESSSSEESSEEE). The interval 84–570 (SSDSSEDSSE…GKAGKESEEE (487 aa)) is 11 X 12 AA approximate repeats of an acidic serine cluster. S87, S88, S91, and S92 each carry phosphoserine. Acidic residues predominate over residues 87–96 (SSEDSSEEED). S88 and S91 each carry diphosphoserine. Composition is skewed to low complexity over residues 120 to 132 (KAAA…SSSE) and 149 to 160 (QQKAVKPQAKAV). The Acidic serine cluster 3 repeat unit spans residues 170–181 (SESESDSSSEDE). Over residues 170 to 182 (SESESDSSSEDEA) the composition is skewed to acidic residues. Low complexity-rich tracts occupy residues 183-207 (PQTQ…KAPA), 215-236 (AQPK…SSSS), and 246-279 (AAPL…SSED). Glycyl lysine isopeptide (Lys-Gly) (interchain with G-Cter in SUMO2) cross-links involve residues K189 and K200. 3 Acidic serine cluster repeats span residues 231-242 (SSSSSSDDSEEE), 274-285 (SSSSEDSSSEEE), and 335-346 (SSEESDSSSEEE). Glycyl lysine isopeptide (Lys-Gly) (interchain with G-Cter in SUMO2) cross-links involve residues K352 and K357. 3 positions are modified to phosphoserine: S372, S373, and S376. The Acidic serine cluster 7 repeat unit spans residues 373 to 384 (SDSSDSDSSEDE). Glycyl lysine isopeptide (Lys-Gly) (interchain with G-Cter in SUMO2) cross-links involve residues K399, K405, K410, and K416. Residues 408-419 (AAKAVATPKQPA) show a composition bias toward low complexity. K424 is modified (N6-acetyllysine; alternate). Residue K424 forms a Glycyl lysine isopeptide (Lys-Gly) (interchain with G-Cter in SUMO1); alternate linkage. K424 participates in a covalent cross-link: Glycyl lysine isopeptide (Lys-Gly) (interchain with G-Cter in SUMO2); alternate. The span at 434–444 (SSEEESSSSEE) shows a compositional bias: acidic residues. Residues 434–445 (SSEEESSSSEEE) form an Acidic serine cluster 8 repeat. Residues K449 and K461 each participate in a glycyl lysine isopeptide (Lys-Gly) (interchain with G-Cter in SUMO2) cross-link. S465 bears the Phosphoserine mark. Low complexity-rich tracts occupy residues 474–485 (AGGDSSSDSESS) and 504–529 (AGAA…SSSE). An Acidic serine cluster 9 repeat occupies 479–490 (SSDSESSSSEEE). K510 participates in a covalent cross-link: Glycyl lysine isopeptide (Lys-Gly) (interchain with G-Cter in SUMO2). Acidic serine cluster repeat units lie at residues 524–535 (SSSSSEDSSEEE) and 559–570 (QNGKAGKESEEE). Residue S567 is modified to Phosphoserine. K584 is covalently cross-linked (Glycyl lysine isopeptide (Lys-Gly) (interchain with G-Cter in SUMO2)). S587 is modified (phosphoserine). T596 is subject to Phosphothreonine. K609 participates in a covalent cross-link: Glycyl lysine isopeptide (Lys-Gly) (interchain with G-Cter in SUMO2). A phosphothreonine mark is found at T612 and T615. K618 is covalently cross-linked (Glycyl lysine isopeptide (Lys-Gly) (interchain with G-Cter in SUMO2)). Residues S627 and S648 each carry the phosphoserine modification. Residue K652 forms a Glycyl lysine isopeptide (Lys-Gly) (interchain with G-Cter in SUMO2) linkage. Position 668 is an N6-acetyllysine; alternate (K668). A Glycyl lysine isopeptide (Lys-Gly) (interchain with G-Cter in SUMO2); alternate cross-link involves residue K668. R688 is subject to Omega-N-methylarginine. Position 691 is a phosphoserine (S691). K700 participates in a covalent cross-link: Glycyl lysine isopeptide (Lys-Gly) (interchain with G-Cter in SUMO2). S703 is modified (phosphoserine).

It belongs to the NOLC1 family. In terms of assembly, interacts with RNA polymerase I 194 kDa subunit (RPA194) and with casein kinase-II. Interacts with DKC1/NAP57, NOP58 and fibrillarin. Post-translationally, undergoes rapid and massive phosphorylation/dephosphorylation cycles on CK2 and PKC sites. NOLC1 is one of the mostly phosphorylated proteins in the cell. In terms of processing, ubiquitinated. Monoubiquitination by the BCR(KBTBD8) complex promotes the formation of a NOLC1-TCOF1 complex that acts as a platform to connect RNA polymerase I with enzymes responsible for ribosomal processing and modification, leading to remodel the translational program of differentiating cells in favor of neural crest specification. Pyrophosphorylated by 5-diphosphoinositol pentakisphosphate (5-IP7). Serine pyrophosphorylation is achieved by Mg(2+)-dependent, but enzyme independent transfer of a beta-phosphate from a inositol pyrophosphate to a pre-phosphorylated serine residue.

The protein localises to the cytoplasm. It is found in the nucleus. It localises to the nucleolus. Nucleolar protein that acts as a regulator of RNA polymerase I by connecting RNA polymerase I with enzymes responsible for ribosomal processing and modification. Required for neural crest specification: following monoubiquitination by the BCR(KBTBD8) complex, associates with TCOF1 and acts as a platform to connect RNA polymerase I with enzymes responsible for ribosomal processing and modification, leading to remodel the translational program of differentiating cells in favor of neural crest specification. Involved in nucleologenesis, possibly by playing a role in the maintenance of the fundamental structure of the fibrillar center and dense fibrillar component in the nucleolus. It has intrinsic GTPase and ATPase activities. In Rattus norvegicus (Rat), this protein is Nucleolar and coiled-body phosphoprotein 1.